The primary structure comprises 599 residues: Elongation factor 4 (599 aa).

The 183-residue stretch at 2 to 184 folds into the tr-type G domain; that stretch reads KHIRNFSIIA…RLVRDIPAPE (183 aa). GTP is bound by residues 14-19 and 131-134; these read DHGKST and NKID.

It belongs to the TRAFAC class translation factor GTPase superfamily. Classic translation factor GTPase family. LepA subfamily.

It is found in the cell inner membrane. The catalysed reaction is GTP + H2O = GDP + phosphate + H(+). Its function is as follows. Required for accurate and efficient protein synthesis under certain stress conditions. May act as a fidelity factor of the translation reaction, by catalyzing a one-codon backward translocation of tRNAs on improperly translocated ribosomes. Back-translocation proceeds from a post-translocation (POST) complex to a pre-translocation (PRE) complex, thus giving elongation factor G a second chance to translocate the tRNAs correctly. Binds to ribosomes in a GTP-dependent manner. In Yersinia pestis bv. Antiqua (strain Antiqua), this protein is Elongation factor 4.